A 566-amino-acid polypeptide reads, in one-letter code: Alpha-amylase (566 aa).

An N-terminal signal peptide occupies residues 1–28; that stretch reads MARRLATASLAVLAAAATALTAPTPAAA. Residues N120, Q166, and D175 each contribute to the Ca(2+) site. The active-site Nucleophile is the D205. A Ca(2+)-binding site is contributed by H209. E232 functions as the Proton donor in the catalytic mechanism. One can recognise a CBM20 domain in the interval 465-566; sequence GPGTGQTSAS…ALTLNDTWRG (102 aa).

Belongs to the glycosyl hydrolase 13 family. As to quaternary structure, monomer. The cofactor is Ca(2+).

The catalysed reaction is Endohydrolysis of (1-&gt;4)-alpha-D-glucosidic linkages in polysaccharides containing three or more (1-&gt;4)-alpha-linked D-glucose units.. This is Alpha-amylase (amy) from Streptomyces griseus.